We begin with the raw amino-acid sequence, 293 residues long: Small ribosomal subunit protein uS2m (293 aa).

Positions 21-38 are enriched in low complexity; the sequence is GRAAQRGRTLGSAAAAAA. Disordered regions lie at residues 21–49 and 263–293; these read GRAA…DRSA and QGAP…GHSP. Residues 39–49 are compositionally biased toward basic and acidic residues; the sequence is REPERDSDRSA. A compositionally biased stretch (pro residues) spans 267–279; that stretch reads GPHPANPAAPGAP.

Belongs to the universal ribosomal protein uS2 family. Component of the mitochondrial ribosome small subunit (28S) which comprises a 12S rRNA and about 30 distinct proteins.

The protein localises to the mitochondrion. Functionally, required for mitoribosome formation and stability, and mitochondrial translation. In Bos taurus (Bovine), this protein is Small ribosomal subunit protein uS2m (MRPS2).